A 551-amino-acid chain; its full sequence is Chaperonin GroEL (551 aa).

ATP-binding positions include 29–32, Lys50, 86–90, Gly414, 478–480, and Asp494; these read TMGP, DGTTT, and NAA.

It belongs to the chaperonin (HSP60) family. Forms a cylinder of 14 subunits composed of two heptameric rings stacked back-to-back. Interacts with the co-chaperonin GroES.

It localises to the cytoplasm. The catalysed reaction is ATP + H2O + a folded polypeptide = ADP + phosphate + an unfolded polypeptide.. In terms of biological role, together with its co-chaperonin GroES, plays an essential role in assisting protein folding. The GroEL-GroES system forms a nano-cage that allows encapsulation of the non-native substrate proteins and provides a physical environment optimized to promote and accelerate protein folding. In Legionella jeonii, this protein is Chaperonin GroEL.